We begin with the raw amino-acid sequence, 596 residues long: Elongation factor 4 (596 aa).

In terms of domain architecture, tr-type G spans 2 to 183 (ENIRNFCIIA…AIIQRIPPPK (182 aa)). GTP-binding positions include 14–19 (DHGKST) and 130–133 (NKID).

The protein belongs to the TRAFAC class translation factor GTPase superfamily. Classic translation factor GTPase family. LepA subfamily.

The protein localises to the cell inner membrane. It carries out the reaction GTP + H2O = GDP + phosphate + H(+). Its function is as follows. Required for accurate and efficient protein synthesis under certain stress conditions. May act as a fidelity factor of the translation reaction, by catalyzing a one-codon backward translocation of tRNAs on improperly translocated ribosomes. Back-translocation proceeds from a post-translocation (POST) complex to a pre-translocation (PRE) complex, thus giving elongation factor G a second chance to translocate the tRNAs correctly. Binds to ribosomes in a GTP-dependent manner. In Cytophaga hutchinsonii (strain ATCC 33406 / DSM 1761 / CIP 103989 / NBRC 15051 / NCIMB 9469 / D465), this protein is Elongation factor 4.